Reading from the N-terminus, the 354-residue chain is Methylthioribose-1-phosphate isomerase (354 aa).

Residues 45 to 47, Arg-87, and Gln-204 each bind substrate; that span reads RGA. Catalysis depends on Asp-245, which acts as the Proton donor. 255 to 256 lines the substrate pocket; that stretch reads NK.

The protein belongs to the eIF-2B alpha/beta/delta subunits family. MtnA subfamily.

It carries out the reaction 5-(methylsulfanyl)-alpha-D-ribose 1-phosphate = 5-(methylsulfanyl)-D-ribulose 1-phosphate. Its pathway is amino-acid biosynthesis; L-methionine biosynthesis via salvage pathway; L-methionine from S-methyl-5-thio-alpha-D-ribose 1-phosphate: step 1/6. In terms of biological role, catalyzes the interconversion of methylthioribose-1-phosphate (MTR-1-P) into methylthioribulose-1-phosphate (MTRu-1-P). In Chlorobaculum tepidum (strain ATCC 49652 / DSM 12025 / NBRC 103806 / TLS) (Chlorobium tepidum), this protein is Methylthioribose-1-phosphate isomerase.